The chain runs to 394 residues: Dihydroorotase (394 aa).

His-15, His-17, Lys-98, His-135, His-175, and Asp-245 together coordinate Zn(2+). An N6-carboxylysine modification is found at Lys-98.

Belongs to the metallo-dependent hydrolases superfamily. DHOase family. Class II DHOase subfamily. Requires Zn(2+) as cofactor.

The enzyme catalyses (S)-dihydroorotate + H2O = N-carbamoyl-L-aspartate + H(+). Its pathway is pyrimidine metabolism; UMP biosynthesis via de novo pathway; (S)-dihydroorotate from bicarbonate: step 3/3. The sequence is that of Dihydroorotase (PYR3) from Mycosarcoma maydis (Corn smut fungus).